Consider the following 455-residue polypeptide: MSLDIVILAAGQGTRMRSALPKVLHPVAGNSMLGHVIHSARQLQPQGIHVVIGHGAEQVRERLAAEDLNFVMQDKQLGTGHAVAQALPAITADTVLVLYGDVPLIEVETLQRLLAKVSEQQLGLLTVTLQDPTGYGRIVRDAAGNVTAIVEHKDASEAQKAIKEGNTGILAMPAARLADWMGRLSNNNAQGEYYLTDVIAMAVADGLVVATEQPHDPMEVQGANDRRQLSELERHYQLREGRRLMAQGVTLRDPARFDVRGEVTVGRDVLIDINVILEGKVVIEDDVQIGPNCVIKDSTLRKGVVIKANSHIEGAVMGEGSDAGPFARLRPGSVLEAKAHVGNFVELKNAHLGEGAKAGHLTYLGDAEIGARTNIGAGTITCNYDGANKFRTVMGEDVFIGSNNSLVAPVEIQAGATTAAGSTITQTVEAGQLGVARARQRNIEGWKRPEKIKKS.

The tract at residues 1–226 (MSLDIVILAA…PMEVQGANDR (226 aa)) is pyrophosphorylase. Residues 8 to 11 (LAAG), Lys-22, Gln-73, 78 to 79 (GT), 99 to 101 (YGD), Gly-136, Glu-151, Asn-166, and Asn-224 each bind UDP-N-acetyl-alpha-D-glucosamine. Mg(2+) is bound at residue Asp-101. Asn-224 is a binding site for Mg(2+). The interval 227–247 (RQLSELERHYQLREGRRLMAQ) is linker. Positions 248–455 (GVTLRDPARF…WKRPEKIKKS (208 aa)) are N-acetyltransferase. Residues Arg-330 and Lys-348 each contribute to the UDP-N-acetyl-alpha-D-glucosamine site. His-360 acts as the Proton acceptor in catalysis. Tyr-363 and Asn-374 together coordinate UDP-N-acetyl-alpha-D-glucosamine. Acetyl-CoA is bound by residues Ala-377, 383–384 (NY), Ser-402, Ala-420, and Arg-437.

The protein in the N-terminal section; belongs to the N-acetylglucosamine-1-phosphate uridyltransferase family. It in the C-terminal section; belongs to the transferase hexapeptide repeat family. As to quaternary structure, homotrimer. It depends on Mg(2+) as a cofactor.

It is found in the cytoplasm. It carries out the reaction alpha-D-glucosamine 1-phosphate + acetyl-CoA = N-acetyl-alpha-D-glucosamine 1-phosphate + CoA + H(+). It catalyses the reaction N-acetyl-alpha-D-glucosamine 1-phosphate + UTP + H(+) = UDP-N-acetyl-alpha-D-glucosamine + diphosphate. Its pathway is nucleotide-sugar biosynthesis; UDP-N-acetyl-alpha-D-glucosamine biosynthesis; N-acetyl-alpha-D-glucosamine 1-phosphate from alpha-D-glucosamine 6-phosphate (route II): step 2/2. It participates in nucleotide-sugar biosynthesis; UDP-N-acetyl-alpha-D-glucosamine biosynthesis; UDP-N-acetyl-alpha-D-glucosamine from N-acetyl-alpha-D-glucosamine 1-phosphate: step 1/1. It functions in the pathway bacterial outer membrane biogenesis; LPS lipid A biosynthesis. In terms of biological role, catalyzes the last two sequential reactions in the de novo biosynthetic pathway for UDP-N-acetylglucosamine (UDP-GlcNAc). The C-terminal domain catalyzes the transfer of acetyl group from acetyl coenzyme A to glucosamine-1-phosphate (GlcN-1-P) to produce N-acetylglucosamine-1-phosphate (GlcNAc-1-P), which is converted into UDP-GlcNAc by the transfer of uridine 5-monophosphate (from uridine 5-triphosphate), a reaction catalyzed by the N-terminal domain. This is Bifunctional protein GlmU from Pseudomonas entomophila (strain L48).